The following is a 165-amino-acid chain: UPF0114 protein Ent638_3411 (165 aa).

A run of 3 helical transmembrane segments spans residues 15–35 (LLAP…IKFF), 53–73 (LILV…LVMV), and 136–156 (LMWY…MGYL).

The protein belongs to the UPF0114 family.

It is found in the cell membrane. This is UPF0114 protein Ent638_3411 from Enterobacter sp. (strain 638).